Here is a 189-residue protein sequence, read N- to C-terminus: Anthranilate synthase component 2 (189 aa).

Residues 1–189 (MILIIDNYDS…QLLRNFLEYS (189 aa)) form the Glutamine amidotransferase type-1 domain. 52-54 (GPG) is a binding site for L-glutamine. Cysteine 79 acts as the Nucleophile; for GATase activity in catalysis. Residues glutamine 83 and 129–130 (SL) contribute to the L-glutamine site. Active-site residues include histidine 169 and glutamate 171.

As to quaternary structure, tetramer of two components I and two components II.

Its subcellular location is the plastid. It is found in the chloroplast. It catalyses the reaction chorismate + L-glutamine = anthranilate + pyruvate + L-glutamate + H(+). The protein operates within amino-acid biosynthesis; L-tryptophan biosynthesis; L-tryptophan from chorismate: step 1/5. The polypeptide is Anthranilate synthase component 2 (trpG) (Pyropia yezoensis (Susabi-nori)).